We begin with the raw amino-acid sequence, 111 residues long: Regulator of ribonuclease activity B (111 aa).

This sequence belongs to the RraB family. In terms of assembly, interacts with the C-terminal region of Rne.

The protein localises to the cytoplasm. Functionally, globally modulates RNA abundance by binding to RNase E (Rne) and regulating its endonucleolytic activity. Can modulate Rne action in a substrate-dependent manner by altering the composition of the degradosome. This is Regulator of ribonuclease activity B from Pseudoalteromonas translucida (strain TAC 125).